Here is a 267-residue protein sequence, read N- to C-terminus: Serine acetyltransferase (267 aa).

Belongs to the transferase hexapeptide repeat family.

It localises to the cytoplasm. The enzyme catalyses L-serine + acetyl-CoA = O-acetyl-L-serine + CoA. It functions in the pathway amino-acid biosynthesis; L-cysteine biosynthesis; L-cysteine from L-serine: step 1/2. In Haemophilus influenzae (strain ATCC 51907 / DSM 11121 / KW20 / Rd), this protein is Serine acetyltransferase (cysE).